We begin with the raw amino-acid sequence, 95 residues long: Co-chaperonin GroES (95 aa).

The protein belongs to the GroES chaperonin family. As to quaternary structure, heptamer of 7 subunits arranged in a ring. Interacts with the chaperonin GroEL.

The protein resides in the cytoplasm. In terms of biological role, together with the chaperonin GroEL, plays an essential role in assisting protein folding. The GroEL-GroES system forms a nano-cage that allows encapsulation of the non-native substrate proteins and provides a physical environment optimized to promote and accelerate protein folding. GroES binds to the apical surface of the GroEL ring, thereby capping the opening of the GroEL channel. The protein is Co-chaperonin GroES of Geobacter metallireducens (strain ATCC 53774 / DSM 7210 / GS-15).